We begin with the raw amino-acid sequence, 256 residues long: Thiazole synthase (256 aa).

K102 acts as the Schiff-base intermediate with DXP in catalysis. 1-deoxy-D-xylulose 5-phosphate-binding positions include G163, 189-190 (AG), and 211-212 (AT).

This sequence belongs to the ThiG family. In terms of assembly, homotetramer. Forms heterodimers with either ThiH or ThiS.

It localises to the cytoplasm. The enzyme catalyses [ThiS sulfur-carrier protein]-C-terminal-Gly-aminoethanethioate + 2-iminoacetate + 1-deoxy-D-xylulose 5-phosphate = [ThiS sulfur-carrier protein]-C-terminal Gly-Gly + 2-[(2R,5Z)-2-carboxy-4-methylthiazol-5(2H)-ylidene]ethyl phosphate + 2 H2O + H(+). The protein operates within cofactor biosynthesis; thiamine diphosphate biosynthesis. Its function is as follows. Catalyzes the rearrangement of 1-deoxy-D-xylulose 5-phosphate (DXP) to produce the thiazole phosphate moiety of thiamine. Sulfur is provided by the thiocarboxylate moiety of the carrier protein ThiS. In vitro, sulfur can be provided by H(2)S. The protein is Thiazole synthase of Nocardia farcinica (strain IFM 10152).